Consider the following 475-residue polypeptide: Phenolic acid decarboxylase (475 aa).

N161, H183, and E225 together coordinate Mn(2+). Residues 161-166 (NVGIYR) and 182-183 (MH) contribute to the prenylated FMN site. E274 (proton donor) is an active-site residue.

It belongs to the UbiD family. YclC subfamily. Prenylated FMN is required as a cofactor. Mn(2+) serves as cofactor.

It carries out the reaction 4-hydroxybenzoate + H(+) = phenol + CO2. It catalyses the reaction vanillate + H(+) = guaiacol + CO2. Involved in the non-oxidative decarboxylation and detoxification of phenolic derivatives under both aerobic and anaerobic conditions. Phenolic acid decarboxylase that catalyzes the reversible decarboxylation of 4-hydroxybenzoate and vanillate. The sequence is that of Phenolic acid decarboxylase from Escherichia coli O157:H7.